A 444-amino-acid polypeptide reads, in one-letter code: N-succinylarginine dihydrolase (444 aa).

Residues 19–28, Asn110, and 137–138 each bind substrate; these read AGLSFGNVAS and HR. Glu174 is an active-site residue. Arg214 lines the substrate pocket. The active site involves His250. Substrate-binding residues include Asp252 and Asn362. Cys368 functions as the Nucleophile in the catalytic mechanism.

This sequence belongs to the succinylarginine dihydrolase family. As to quaternary structure, homodimer.

The enzyme catalyses N(2)-succinyl-L-arginine + 2 H2O + 2 H(+) = N(2)-succinyl-L-ornithine + 2 NH4(+) + CO2. It participates in amino-acid degradation; L-arginine degradation via AST pathway; L-glutamate and succinate from L-arginine: step 2/5. Catalyzes the hydrolysis of N(2)-succinylarginine into N(2)-succinylornithine, ammonia and CO(2). The polypeptide is N-succinylarginine dihydrolase (Shewanella frigidimarina (strain NCIMB 400)).